Here is a 101-residue protein sequence, read N- to C-terminus: Small ribosomal subunit protein uS14 (101 aa).

Belongs to the universal ribosomal protein uS14 family. In terms of assembly, part of the 30S ribosomal subunit. Contacts proteins S3 and S10.

In terms of biological role, binds 16S rRNA, required for the assembly of 30S particles and may also be responsible for determining the conformation of the 16S rRNA at the A site. This chain is Small ribosomal subunit protein uS14, found in Neisseria gonorrhoeae (strain ATCC 700825 / FA 1090).